The chain runs to 401 residues: S-adenosylmethionine synthase (401 aa).

G136–D141 provides a ligand contact to ATP.

This sequence belongs to the AdoMet synthase 2 family. Requires Mg(2+) as cofactor.

The catalysed reaction is L-methionine + ATP + H2O = S-adenosyl-L-methionine + phosphate + diphosphate. Its pathway is amino-acid biosynthesis; S-adenosyl-L-methionine biosynthesis; S-adenosyl-L-methionine from L-methionine: step 1/1. In terms of biological role, catalyzes the formation of S-adenosylmethionine from methionine and ATP. In Pyrococcus horikoshii (strain ATCC 700860 / DSM 12428 / JCM 9974 / NBRC 100139 / OT-3), this protein is S-adenosylmethionine synthase (mat).